A 209-amino-acid chain; its full sequence is Orotate phosphoribosyltransferase (209 aa).

Residues arginine 96, lysine 100, histidine 102, and 122–130 (EDLISTGGS) each bind 5-phospho-alpha-D-ribose 1-diphosphate. Serine 126 is an orotate binding site.

This sequence belongs to the purine/pyrimidine phosphoribosyltransferase family. PyrE subfamily. Homodimer. Mg(2+) is required as a cofactor.

It catalyses the reaction orotidine 5'-phosphate + diphosphate = orotate + 5-phospho-alpha-D-ribose 1-diphosphate. It functions in the pathway pyrimidine metabolism; UMP biosynthesis via de novo pathway; UMP from orotate: step 1/2. Catalyzes the transfer of a ribosyl phosphate group from 5-phosphoribose 1-diphosphate to orotate, leading to the formation of orotidine monophosphate (OMP). This is Orotate phosphoribosyltransferase from Streptococcus thermophilus (strain CNRZ 1066).